The sequence spans 1036 residues: Mediator of RNA polymerase II transcription subunit 24 (1036 aa).

It belongs to the Mediator complex subunit 24 family. In terms of assembly, component of the Mediator complex.

Its subcellular location is the nucleus. In terms of biological role, component of the Mediator complex, a coactivator involved in the regulated transcription of nearly all RNA polymerase II-dependent genes. Mediator functions as a bridge to convey information from gene-specific regulatory proteins to the basal RNA polymerase II transcription machinery. Mediator is recruited to promoters by direct interactions with regulatory proteins and serves as a scaffold for the assembly of a functional preinitiation complex with RNA polymerase II and the general transcription factors. The chain is Mediator of RNA polymerase II transcription subunit 24 (MED24) from Anopheles gambiae (African malaria mosquito).